Reading from the N-terminus, the 70-residue chain is Envelope small membrane protein (70 aa).

A lipid anchor (N-myristoyl glycine; by host) is attached at glycine 2. Residues 2-15 (GSLWSKISQLFVDA) form an endoplasmic reticulum retention signal region. The Virion surface portion of the chain corresponds to 2 to 25 (GSLWSKISQLFVDAFTEFLVSVVD). The chain crosses the membrane as a helical span at residues 26 to 46 (IAIFLAILFGFTVAGWLLVFL). Topologically, residues 47-70 (LRVVCSALLRSRSAIHSPELSKVL) are intravirion.

The protein belongs to the arteriviridae E protein family. In terms of assembly, homooligomer. Associates with itself into higher-order structures, including dimers, trimers and tetramers. Associates with the GP2a-GP3-GP4 complex. In terms of processing, myristoylated. Post-translationally, not glycosylated.

Its subcellular location is the virion membrane. The protein resides in the host endoplasmic reticulum membrane. The protein localises to the host Golgi apparatus membrane. It localises to the secreted. In terms of biological role, minor envelope protein. May function as a viroporin in the virion envelope that facilitates uncoating of the virus in order to release the genomic RNA into the cytoplasm for subsequent replication. This chain is Envelope small membrane protein (GP2b), found in Sus scrofa (Pig).